The primary structure comprises 93 residues: Small ribosomal subunit protein uS19 (93 aa).

It belongs to the universal ribosomal protein uS19 family.

Functionally, protein S19 forms a complex with S13 that binds strongly to the 16S ribosomal RNA. The chain is Small ribosomal subunit protein uS19 from Campylobacter lari (strain RM2100 / D67 / ATCC BAA-1060).